Here is a 531-residue protein sequence, read N- to C-terminus: Nuclear RNA export factor 3 (531 aa).

Disordered stretches follow at residues 33 to 59 and 83 to 106; these read RSEP…HGAH and QDQT…GNMP. A compositionally biased stretch (polar residues) spans 41 to 50; that stretch reads MHSSSHQQQD. Basic and acidic residues predominate over residues 83–102; that stretch reads QDQTHVNMEREQKPPERRME. The region spanning 113 to 192 is the RRM domain; it reads WFKITVPFGI…IFVNPAGIPH (80 aa). An NTF2 domain is found at 344 to 494; sequence LVLQFLQQYY…LCIVNDKLFV (151 aa).

It belongs to the NXF family. Interacts with NXT1, NXT2, E1B-AP5 and CRM1 nuclear export factor. Expressed at high level in testis and at low level in a small number of tissues.

It localises to the nucleus. Its subcellular location is the cytoplasm. May function as a tissue-specific nuclear mRNA export factor. The chain is Nuclear RNA export factor 3 (NXF3) from Homo sapiens (Human).